Here is a 211-residue protein sequence, read N- to C-terminus: Large ribosomal subunit protein uL3 (211 aa).

Gln150 carries the post-translational modification N5-methylglutamine.

This sequence belongs to the universal ribosomal protein uL3 family. As to quaternary structure, part of the 50S ribosomal subunit. Forms a cluster with proteins L14 and L19. In terms of processing, methylated by PrmB.

In terms of biological role, one of the primary rRNA binding proteins, it binds directly near the 3'-end of the 23S rRNA, where it nucleates assembly of the 50S subunit. This chain is Large ribosomal subunit protein uL3, found in Pseudomonas fluorescens (strain SBW25).